The following is a 326-amino-acid chain: WD repeat-containing protein slr1409 (326 aa).

6 WD repeats span residues 47 to 77 (GSDV…TLWT), 88 to 118 (GQKP…RLWN), 129 to 159 (PHRA…KIFT), 169 to 199 (LKSG…HLIN), 210 to 240 (TGQG…KLWN), and 252 to 282 (VPTG…RFWQ).

The protein is WD repeat-containing protein slr1409 of Synechocystis sp. (strain ATCC 27184 / PCC 6803 / Kazusa).